Here is a 113-residue protein sequence, read N- to C-terminus: Probable 4-amino-4-deoxy-L-arabinose-phosphoundecaprenol flippase subunit ArnE (113 aa).

Transmembrane regions (helical) follow at residues Phe-40–Val-60, Leu-64–Ala-84, and Val-92–Gly-112.

It belongs to the ArnE family. As to quaternary structure, heterodimer of ArnE and ArnF.

Its subcellular location is the cell inner membrane. It participates in bacterial outer membrane biogenesis; lipopolysaccharide biosynthesis. In terms of biological role, translocates 4-amino-4-deoxy-L-arabinose-phosphoundecaprenol (alpha-L-Ara4N-phosphoundecaprenol) from the cytoplasmic to the periplasmic side of the inner membrane. In Pectobacterium atrosepticum (strain SCRI 1043 / ATCC BAA-672) (Erwinia carotovora subsp. atroseptica), this protein is Probable 4-amino-4-deoxy-L-arabinose-phosphoundecaprenol flippase subunit ArnE.